The sequence spans 598 residues: MRSSYAGQVSEKLMGQTVTLMGWAHRRRDHGGVIFIDLRDREGLVQIVCDPDRAEMFKTAEGVRNEFCLKIVGLVRARPSGTENANLVSGKVEVLCHELEVLNPSVTPPFQIDDENLSETTRLTHRVLDLRRPQMQKNLMLRYRVSMEVRKFLDANGFIDIETPMLTKSTPEGARDYLVPSRVNDGHFFALPQSPQLFKQLLMVAGFDRYYQITKCFRDEDLRADRQPEFTQIDIETSFLSEEEIRGMFEGMIRTVFRNTIGVDLPGYPVMTYADAMHKYGSDKPDLRVKLQFTELTDVMRDVDFKVFSAPAQSKNGRVVALRVPGGADMSRGEIDGYTEFVKIYGAKGLAWIKVNDVAKGREGMQSPIVKNLHDAAIAEIIARTGVCNGDLIFFGADKAKVVNDAIGALRVKVGHSDFGKKNGLFEDKWAPLWVVDFPMFEHDDEGDRWNAVHHPFTAPKDGHEDYMDTDPGKCIAKAYDMVLNGWELGGGSVRIHKAEVQSKVFSALKIGKEDAQVKFGFLLDALQYGAPPHGGLAFGLDRIVTMMTRAESIRDVIAFPKTQRAQCLLTGAPSLVDEKQLRELHIRLRNAGAAGNA.

L-aspartate is bound at residue Glu172. Positions Gln196 to Lys199 are aspartate. An L-aspartate-binding site is contributed by Arg218. ATP-binding positions include Arg218–Glu220 and Gln227. His454 provides a ligand contact to L-aspartate. Residue Glu488 participates in ATP binding. Arg495 contacts L-aspartate. Gly540–Arg543 is a binding site for ATP.

It belongs to the class-II aminoacyl-tRNA synthetase family. Type 1 subfamily. Homodimer.

The protein localises to the cytoplasm. It carries out the reaction tRNA(Asx) + L-aspartate + ATP = L-aspartyl-tRNA(Asx) + AMP + diphosphate. In terms of biological role, aspartyl-tRNA synthetase with relaxed tRNA specificity since it is able to aspartylate not only its cognate tRNA(Asp) but also tRNA(Asn). Reaction proceeds in two steps: L-aspartate is first activated by ATP to form Asp-AMP and then transferred to the acceptor end of tRNA(Asp/Asn). This is Aspartate--tRNA(Asp/Asn) ligase from Leptothrix cholodnii (strain ATCC 51168 / LMG 8142 / SP-6) (Leptothrix discophora (strain SP-6)).